Consider the following 683-residue polypeptide: Zinc finger protein 418 (683 aa).

Positions 48-123 (VTIEDVTVYF…TPKQGQLRQK (76 aa)) constitute a KRAB domain. Positions 102-120 (QSLSQTEAPQVRTPKQGQL) are enriched in polar residues. Disordered regions lie at residues 102 to 124 (QSLS…RQKP) and 209 to 247 (DIPN…QHRL). Residues 225 to 239 (FHRDKNNSESDEYKK) are compositionally biased toward basic and acidic residues. 14 consecutive C2H2-type zinc fingers follow at residues 287–309 (YECH…QRRH), 315–337 (YKCG…CRVH), 343–365 (FECL…QRTH), 371–393 (YECS…QRTH), 399–421 (YECG…QRVH), 427–449 (YHCE…SKIH), 455–477 (YECG…QRTH), 483–505 (YECR…RRIH), 511–533 (YECE…QRVH), 539–561 (YKCE…QRTH), 567–589 (YECA…QKIH), 595–617 (YHCD…QRVH), 623–645 (YTCG…RRIH), and 651–673 (YECD…QLLH).

It belongs to the krueppel C2H2-type zinc-finger protein family.

The protein localises to the nucleus. Its function is as follows. Transcriptional repressor. May play a role as regulator of the ubiquitin-proteasome system and autophagy-lysosomal pathway. This Rattus norvegicus (Rat) protein is Zinc finger protein 418.